The primary structure comprises 424 residues: Putative chloroquine resistance transporter (424 aa).

Residues 1-57 lie on the Cytoplasmic side of the membrane; the sequence is MKILKKKKKGNQQIVPDERYRELDSHAPNENEIADEAPMSRKILYYLKLVYHEIREN. The chain crosses the membrane as a helical span at residues 58-78; it reads ITIYLLIILYLCVCVMNKIMA. Residues 79–89 lie on the Vacuolar side of the membrane; it reads KRTLKKIGNYS. Residue Asn-87 is glycosylated (N-linked (GlcNAc...) asparagine). The helical transmembrane segment at 90 to 110 threads the bilayer; sequence FVTSETHNTICMVVFFSLYFI. The Cytoplasmic segment spans residues 111-124; the sequence is FGRRVTSAKERHQN. A helical membrane pass occupies residues 125-145; it reads FGLQFLLISLLDACSVIIAFI. The Vacuolar segment spans residues 146 to 153; sequence GLTRTTGN. Residues 154 to 174 form a helical membrane-spanning segment; the sequence is IQSFVMQLSIPINMFFCFLIL. Topologically, residues 175 to 179 are cytoplasmic; it reads RYRYH. A helical transmembrane segment spans residues 180–200; sequence LFNYVGASIIVLTIAIVEFIL. The Vacuolar portion of the chain corresponds to 201-208; that stretch reads SFETQEEN. A helical membrane pass occupies residues 209–229; it reads SIVFNLVLIASLIPMSFSNMT. Residues 230 to 246 lie on the Cytoplasmic side of the membrane; sequence REIVFKKYKINILRLNA. Residues 247-267 form a helical membrane-spanning segment; that stretch reads VVSFFQIFTSCLMLPMYTLPF. The Vacuolar segment spans residues 268-316; that stretch reads LKQINLPFSEIGTNIKNGFRCLILGQNTIVENCGLGMAKMCDDCEGAWK. Cystine bridges form between Cys-288/Cys-311 and Cys-300/Cys-308. The chain crosses the membrane as a helical span at residues 317–337; that stretch reads TFLAYSFFNICDNLITSFIID. Residues 338–345 lie on the Cytoplasmic side of the membrane; that stretch reads KFSTMTYT. Residues 346–366 traverse the membrane as a helical segment; that stretch reads IVSCIQGPAIAIAYYFKFLAG. Over 367-376 the chain is Vacuolar; the sequence is DAVMKPRVLD. A helical membrane pass occupies residues 377 to 397; that stretch reads FVTLFGYLFGSIIYRVGNIIL. Over 398–424 the chain is Cytoplasmic; it reads EKKKMMEAGNDDDSEGELTNAESIITQ.

It belongs to the CRT-like transporter family.

It localises to the vacuole membrane. Its function is as follows. Nutrient transporter. Involved in maintaining the osmotic homeostasis of the digestive vacuole. This Plasmodium knowlesi protein is Putative chloroquine resistance transporter.